We begin with the raw amino-acid sequence, 220 residues long: MESRIVLDSRETSLLNTHKVLRNTYFLLGLTLAFSAVVAYISMSLNLPRPGLILMLAGFYGLLFLTYKLSNSGLGILSTFAFTGFLGYTLGPILNVYVSHGAGDIVVLALAGTAAVFFACSAYVLTTKKDMSFLSGTIFALFIVLLLGMVASFFFQSPMLYIAISGLFVVFSTLGILYETSNIIHGGETNYIRATVSIFVSLYNLFISLLNIFSILSNED.

7 helical membrane-spanning segments follow: residues 25 to 45 (YFLL…SMSL), 50 to 70 (PGLI…YKLS), 74 to 94 (LGIL…GPIL), 105 to 125 (IVVL…AYVL), 135 to 155 (SGTI…SFFF), 158 to 178 (PMLY…GILY), and 196 to 216 (VSIF…FSIL).

It belongs to the BI1 family.

It localises to the cell membrane. This is an uncharacterized protein from Pasteurella multocida (strain Pm70).